The sequence spans 221 residues: UPF0758 protein PC1_4100 (221 aa).

One can recognise an MPN domain in the interval 99 to 221 (AMLNPQATGQ…YVSFAERGWI (123 aa)). The Zn(2+) site is built by His-170, His-172, and Asp-183. A JAMM motif motif is present at residues 170–183 (HNHPSGKAEPSQAD).

This sequence belongs to the UPF0758 family. YicR subfamily.

This is UPF0758 protein PC1_4100 from Pectobacterium carotovorum subsp. carotovorum (strain PC1).